The primary structure comprises 357 residues: MEWLNVLESQGQALLGPTAWLVVWTIIKIVIIAVPIILCVAYLTYWERKMIGWMHVRLGPNRVGFKGLLQPFADVFKLLTKEVVVPSQANKILFIVAPVVTLMPALAAWAVVPFGPEAVLANVNAGLLYVMAITSIGVYGVIVAGWASNSKYAFLGALRASAQMVSYELAISFVLVTVLLVSGSLNMNEIVLGQGRGWFAERGLTFLSWNWLPLLPLFVIYVISAVAETNRHPFDVVEGESEIVAGHMVEYSGMAFALFFLGEYANMILLSAMASIMFLGGWMSPIDIAPLNWIPGWIWLGIKTFFVVSLFIWFRASFPRYRYDQIMRLGWKIFIPLTGVWLVVVAIWMQTPWNIWR.

The next 8 membrane-spanning stretches (helical) occupy residues 20–40, 92–112, 127–147, 165–185, 206–226, 268–288, 294–314, and 329–349; these read WLVV…ILCV, ILFI…WAVV, LLYV…AGWA, VSYE…SGSL, FLSW…ISAV, ILLS…PIDI, IPGW…FIWF, and LGWK…AIWM.

It belongs to the complex I subunit 1 family. NDH-1 is composed of 14 different subunits. Subunits NuoA, H, J, K, L, M, N constitute the membrane sector of the complex.

The protein resides in the cell inner membrane. The enzyme catalyses a quinone + NADH + 5 H(+)(in) = a quinol + NAD(+) + 4 H(+)(out). Functionally, NDH-1 shuttles electrons from NADH, via FMN and iron-sulfur (Fe-S) centers, to quinones in the respiratory chain. The immediate electron acceptor for the enzyme in this species is believed to be ubiquinone. Couples the redox reaction to proton translocation (for every two electrons transferred, four hydrogen ions are translocated across the cytoplasmic membrane), and thus conserves the redox energy in a proton gradient. This subunit may bind ubiquinone. The sequence is that of NADH-quinone oxidoreductase subunit H from Bordetella avium (strain 197N).